The sequence spans 691 residues: T-box transcription factor TBX2-B (691 aa).

The T-box DNA-binding region spans 104–277 (LWDQFHKIGT…HNPFAKGFRD (174 aa)). Disordered regions lie at residues 301–440 (CKAD…SLSK) and 612–691 (NLLT…ESPK). Over residues 325-335 (HSPLSAAPSPL) the composition is skewed to low complexity. 3 stretches are compositionally biased toward basic and acidic residues: residues 340-361 (TNREEKFGADSDQELDRREVRS), 378-402 (RLEDRGKDKSTPEKKSDSPESRKDG), and 415-433 (SLEKDKVESRRKEDSKSDP). Residues 624 to 639 (PGSESSKPGSSRESSP) are compositionally biased toward low complexity. Residues 659–684 (SMKDSINELQRIQRLVSGLERQREVS) are a coiled coil. A compositionally biased stretch (basic and acidic residues) spans 678–691 (ERQREVSPGRESPK).

Binds DNA as a monomer.

The protein resides in the nucleus. Transcription factor which acts as a transcriptional repressor. May also function as a transcriptional activator. Binds to the palindromic T site 5'-TTCACACCTAGGTGTGAA-3' DNA sequence, or a half-site, which are present in the regulatory region of several genes. The protein is T-box transcription factor TBX2-B (tbx2-b) of Xenopus laevis (African clawed frog).